We begin with the raw amino-acid sequence, 416 residues long: Glutamyl-tRNA reductase (416 aa).

Residues 51 to 54 (TCNR), Ser-110, 115 to 117 (EPQ), and Gln-121 each bind substrate. Residue Cys-52 is the Nucleophile of the active site. 190–195 (GAGQTG) is an NADP(+) binding site.

It belongs to the glutamyl-tRNA reductase family. Homodimer.

The catalysed reaction is (S)-4-amino-5-oxopentanoate + tRNA(Glu) + NADP(+) = L-glutamyl-tRNA(Glu) + NADPH + H(+). It functions in the pathway porphyrin-containing compound metabolism; protoporphyrin-IX biosynthesis; 5-aminolevulinate from L-glutamyl-tRNA(Glu): step 1/2. In terms of biological role, catalyzes the NADPH-dependent reduction of glutamyl-tRNA(Glu) to glutamate 1-semialdehyde (GSA). In Francisella tularensis subsp. holarctica (strain OSU18), this protein is Glutamyl-tRNA reductase.